The primary structure comprises 112 residues: Mitochondrial import inner membrane translocase subunit TIM14-3 (112 aa).

Ala2 carries the post-translational modification N-acetylalanine. Residues 6 to 28 traverse the membrane as a helical segment; the sequence is IAGAAVAAAAVAGRYGILAWQAF. The 60-residue stretch at 53-112 folds into the J domain; the sequence is EAALILGVRESVVADKVKEAHRRVMVANHPDAGGSHYLASKINEAKDMMLGKSNNSGSAF.

This sequence belongs to the TIM14 family. Probable component of the PAM complex at least composed of a mitochondrial HSP70 protein, TIMM44 and TIMM14. The complex interacts with the TIMM23 component of the TIM17:23 complex.

The protein resides in the mitochondrion. The protein localises to the mitochondrion inner membrane. Its function is as follows. Component of the PAM complex, a complex required for the translocation of transit peptide-containing proteins from the inner membrane into the mitochondrial matrix in an ATP-dependent manner. The polypeptide is Mitochondrial import inner membrane translocase subunit TIM14-3 (TIM14-3) (Arabidopsis thaliana (Mouse-ear cress)).